The chain runs to 190 residues: MTKLENPVLMATIGAAQGLRGEVRARAFTSDPTALGDYGHLHSMDGRIFEVLEIREAKNVVIVRFRGVNNRDAAEALNGLELYIERDNLPDDELEDDEFFYTDLEGLEAVDDKGTAYGTVSGVYDFGAGDLLELKGPGKRPVLIPFSEAAVLEIDLEGGKILIDPMAAGLIDSPDDLTGKPPKPPGKTKE.

One can recognise a PRC barrel domain in the interval 95-177 (EDDEFFYTDL…AGLIDSPDDL (83 aa)). Residues 170–190 (LIDSPDDLTGKPPKPPGKTKE) form a disordered region. The span at 181–190 (PPKPPGKTKE) shows a compositional bias: pro residues.

It belongs to the RimM family. In terms of assembly, binds ribosomal protein uS19.

It localises to the cytoplasm. Its function is as follows. An accessory protein needed during the final step in the assembly of 30S ribosomal subunit, possibly for assembly of the head region. Essential for efficient processing of 16S rRNA. May be needed both before and after RbfA during the maturation of 16S rRNA. It has affinity for free ribosomal 30S subunits but not for 70S ribosomes. In Rhizobium rhizogenes (strain K84 / ATCC BAA-868) (Agrobacterium radiobacter), this protein is Ribosome maturation factor RimM.